Consider the following 333-residue polypeptide: Probable tRNA pseudouridine synthase B (333 aa).

D66 (nucleophile) is an active-site residue. Residues 233 to 308 (LKKIIVKDSA…EVVEITRVIM (76 aa)) enclose the PUA domain.

The protein belongs to the pseudouridine synthase TruB family. Type 2 subfamily.

It carries out the reaction uridine(55) in tRNA = pseudouridine(55) in tRNA. Functionally, could be responsible for synthesis of pseudouridine from uracil-55 in the psi GC loop of transfer RNAs. This Methanococcus maripaludis (strain C6 / ATCC BAA-1332) protein is Probable tRNA pseudouridine synthase B.